The following is a 155-amino-acid chain: Small ribosomal subunit protein uS7cz/uS7cy (155 aa).

Belongs to the universal ribosomal protein uS7 family. Part of the 30S ribosomal subunit.

It is found in the plastid. The protein resides in the chloroplast. Functionally, one of the primary rRNA binding proteins, it binds directly to 16S rRNA where it nucleates assembly of the head domain of the 30S subunit. The protein is Small ribosomal subunit protein uS7cz/uS7cy (rps7-A) of Morus indica (Mulberry).